The chain runs to 157 residues: Crossover junction endodeoxyribonuclease RuvC (157 aa).

Residues D7, E70, and D142 contribute to the active site. Residues D7, E70, and D142 each contribute to the Mg(2+) site.

Belongs to the RuvC family. As to quaternary structure, homodimer which binds Holliday junction (HJ) DNA. The HJ becomes 2-fold symmetrical on binding to RuvC with unstacked arms; it has a different conformation from HJ DNA in complex with RuvA. In the full resolvosome a probable DNA-RuvA(4)-RuvB(12)-RuvC(2) complex forms which resolves the HJ. Mg(2+) serves as cofactor.

Its subcellular location is the cytoplasm. The enzyme catalyses Endonucleolytic cleavage at a junction such as a reciprocal single-stranded crossover between two homologous DNA duplexes (Holliday junction).. Functionally, the RuvA-RuvB-RuvC complex processes Holliday junction (HJ) DNA during genetic recombination and DNA repair. Endonuclease that resolves HJ intermediates. Cleaves cruciform DNA by making single-stranded nicks across the HJ at symmetrical positions within the homologous arms, yielding a 5'-phosphate and a 3'-hydroxyl group; requires a central core of homology in the junction. The consensus cleavage sequence is 5'-(A/T)TT(C/G)-3'. Cleavage occurs on the 3'-side of the TT dinucleotide at the point of strand exchange. HJ branch migration catalyzed by RuvA-RuvB allows RuvC to scan DNA until it finds its consensus sequence, where it cleaves and resolves the cruciform DNA. The chain is Crossover junction endodeoxyribonuclease RuvC from Synechococcus sp. (strain RCC307).